The chain runs to 668 residues: tRNA 5-methylaminomethyl-2-thiouridine biosynthesis bifunctional protein MnmC (668 aa).

The interval 1 to 245 (MKHYSIQPAN…KREMLCGVME (245 aa)) is tRNA (mnm(5)s(2)U34)-methyltransferase. The interval 270-668 (IGGGIASALL…LLKGKAVKAG (399 aa)) is FAD-dependent cmnm(5)s(2)U34 oxidoreductase.

The protein in the N-terminal section; belongs to the methyltransferase superfamily. tRNA (mnm(5)s(2)U34)-methyltransferase family. It in the C-terminal section; belongs to the DAO family. It depends on FAD as a cofactor.

It is found in the cytoplasm. It carries out the reaction 5-aminomethyl-2-thiouridine(34) in tRNA + S-adenosyl-L-methionine = 5-methylaminomethyl-2-thiouridine(34) in tRNA + S-adenosyl-L-homocysteine + H(+). Its function is as follows. Catalyzes the last two steps in the biosynthesis of 5-methylaminomethyl-2-thiouridine (mnm(5)s(2)U) at the wobble position (U34) in tRNA. Catalyzes the FAD-dependent demodification of cmnm(5)s(2)U34 to nm(5)s(2)U34, followed by the transfer of a methyl group from S-adenosyl-L-methionine to nm(5)s(2)U34, to form mnm(5)s(2)U34. The sequence is that of tRNA 5-methylaminomethyl-2-thiouridine biosynthesis bifunctional protein MnmC from Shigella flexneri serotype 5b (strain 8401).